The sequence spans 77 residues: U14-theraphotoxin-Cg1a 1 (77 aa).

The first 21 residues, 1–21 (MKTSVLLVILGIAAITVQCTA), serve as a signal peptide directing secretion. Positions 22-49 (SESVEQDSLRTFVDAVLGWNAEMASEAR) are excised as a propeptide. 3 disulfide bridges follow: C50/C64, C57/C69, and C63/C75. K77 carries the lysine amide modification.

Belongs to the neurotoxin 10 (Hwtx-1) family. 65 (Jztx-21) subfamily. In terms of tissue distribution, expressed by the venom gland.

The protein resides in the secreted. In terms of biological role, probable ion channel inhibitor. This Chilobrachys guangxiensis (Chinese earth tiger tarantula) protein is U14-theraphotoxin-Cg1a 1.